Here is a 100-residue protein sequence, read N- to C-terminus: Large ribosomal subunit protein uL23 (100 aa).

The protein belongs to the universal ribosomal protein uL23 family. In terms of assembly, part of the 50S ribosomal subunit. Contacts protein L29, and trigger factor when it is bound to the ribosome.

One of the early assembly proteins it binds 23S rRNA. One of the proteins that surrounds the polypeptide exit tunnel on the outside of the ribosome. Forms the main docking site for trigger factor binding to the ribosome. This chain is Large ribosomal subunit protein uL23, found in Acaryochloris marina (strain MBIC 11017).